Here is a 436-residue protein sequence, read N- to C-terminus: Gamma-glutamyl phosphate reductase (436 aa).

This sequence belongs to the gamma-glutamyl phosphate reductase family.

Its subcellular location is the cytoplasm. The catalysed reaction is L-glutamate 5-semialdehyde + phosphate + NADP(+) = L-glutamyl 5-phosphate + NADPH + H(+). It functions in the pathway amino-acid biosynthesis; L-proline biosynthesis; L-glutamate 5-semialdehyde from L-glutamate: step 2/2. Its function is as follows. Catalyzes the NADPH-dependent reduction of L-glutamate 5-phosphate into L-glutamate 5-semialdehyde and phosphate. The product spontaneously undergoes cyclization to form 1-pyrroline-5-carboxylate. The protein is Gamma-glutamyl phosphate reductase of Prochlorococcus marinus (strain MIT 9215).